We begin with the raw amino-acid sequence, 146 residues long: Hemoglobin subunit beta (146 aa).

Valine 1 carries the N-acetylvaline modification. The Globin domain maps to glutamine 2–histidine 146. Serine 44 is subject to Phosphoserine. Lysine 59 is subject to N6-acetyllysine. Histidine 63 contributes to the heme b binding site. Lysine 82 carries the N6-acetyllysine modification. Histidine 92 is a binding site for heme b. Cysteine 93 is modified (S-nitrosocysteine). An N6-acetyllysine modification is found at lysine 144.

This sequence belongs to the globin family. As to quaternary structure, heterotetramer of two alpha chains and two beta chains. In terms of tissue distribution, red blood cells.

Involved in oxygen transport from the lung to the various peripheral tissues. This is Hemoglobin subunit beta (HBB) from Equus caballus (Horse).